The chain runs to 260 residues: Putative [LysW]-aminoadipate/[LysW]-glutamate kinase (260 aa).

Residues 35 to 36, R62, and N162 each bind substrate; that span reads GG.

Belongs to the acetylglutamate kinase family. LysZ subfamily.

Its subcellular location is the cytoplasm. It carries out the reaction [amino-group carrier protein]-C-terminal-N-(1,4-dicarboxybutan-1-yl)-L-glutamine + ATP = [amino-group carrier protein]-C-terminal-N-(1-carboxy-5-phosphooxy-5-oxopentan-1-yl)-L-glutamine + ADP. It catalyses the reaction [amino-group carrier protein]-C-terminal-gamma-(L-glutamyl)-L-glutamate + ATP = [amino-group carrier protein]-C-terminal-gamma-(5-phospho-L-glutamyl)-L-glutamate + ADP. The protein operates within amino-acid biosynthesis; L-lysine biosynthesis via AAA pathway; L-lysine from L-alpha-aminoadipate (Thermus route): step 2/5. It functions in the pathway amino-acid biosynthesis; L-arginine biosynthesis. Functionally, involved in both the arginine and lysine biosynthetic pathways. Phosphorylates the LysW-bound precursors glutamate (for arginine biosynthesis), respectively alpha-aminoadipate (for lysine biosynthesis). The chain is Putative [LysW]-aminoadipate/[LysW]-glutamate kinase from Pyrobaculum neutrophilum (strain DSM 2338 / JCM 9278 / NBRC 100436 / V24Sta) (Thermoproteus neutrophilus).